We begin with the raw amino-acid sequence, 342 residues long: MKVGVLTGGGDCPGLNAVIRAVVRKGVQEYGYDFTGFRDGWRGPLEGDTVPLDIPAVRGILPRGGTVLGSSRTNPLKQRDGIRRIKDNLAALGVEALITIGGEDTLGVATRLADEYGVPCVGVPKTIDNDLSATDYTFGFDTAVGIATEAIDRLHTTAESHMRVLVVEVMGRHAGWIALHSGLAGGANVILIPEQRFDVEQVCSWVTSRFRASYAPIVVVAEGAMPRDGDMVLKDESLDSYGHVRLSGVGEWLAKQIEKRTGNEARTTVLGHVQRGGTPSAFDRWLATRFGLHAVDCVHDGDFGKMVALRGTDIVRVPIAEATARLKTVDPALYEEVGVFFG.

Glycine 10 contacts diphosphate. Glutamate 103 is a binding site for Mg(2+). Substrate is bound by residues 126-128, arginine 163, 170-172, glutamate 222, arginine 266, and 272-275; these read TID, MGR, and HVQR. Aspartate 128 serves as the catalytic Proton acceptor.

Belongs to the phosphofructokinase type A (PFKA) family. Mixed-substrate PFK group III subfamily. In terms of assembly, homodimer or homotetramer. Mg(2+) is required as a cofactor.

It is found in the cytoplasm. The enzyme catalyses beta-D-fructose 6-phosphate + diphosphate = beta-D-fructose 1,6-bisphosphate + phosphate + H(+). Its pathway is carbohydrate degradation; glycolysis; D-glyceraldehyde 3-phosphate and glycerone phosphate from D-glucose: step 3/4. Non-allosteric. In terms of biological role, catalyzes the phosphorylation of D-fructose 6-phosphate, the first committing step of glycolysis. Uses inorganic phosphate (PPi) as phosphoryl donor instead of ATP like common ATP-dependent phosphofructokinases (ATP-PFKs), which renders the reaction reversible, and can thus function both in glycolysis and gluconeogenesis. Consistently, PPi-PFK can replace the enzymes of both the forward (ATP-PFK) and reverse (fructose-bisphosphatase (FBPase)) reactions. In Streptomyces coelicolor (strain ATCC BAA-471 / A3(2) / M145), this protein is Pyrophosphate--fructose 6-phosphate 1-phosphotransferase.